The sequence spans 296 residues: MFARLSRSNKFLPIALGVGAASIATAIILQRNYSIMNDTSKAFLGDNEWIDLPIIKIEKLSHDTKRFTFALPKKDQVSGLITASCILAKFVTPKGSNVIRPYTPVSDNGTKGKMELVVKHYENGKFTSHLFGLKENDTVSFKGPITKWEWKPNSYDSITLLGAGTGINPLYQLVHHIAENPEDNTKIHLYYGNKTPEDILLKSELDNLQKKYPDQVKITYFVDKAEGNFEGETGFITKDYLSHQAPKPSEKNQVFVCGPPPFMKAYSGPKVSPQDQGELTGILAELGYSKSNVFKF.

Residues 12 to 29 (LPIALGVGAASIATAIIL) form a helical membrane-spanning segment. Residues 47–151 (NEWIDLPIIK…KGPITKWEWK (105 aa)) form the FAD-binding FR-type domain. 154-189 (SYDSITLLGAGTGINPLYQLVHHIAENPEDNTKIHL) contributes to the FAD binding site.

It belongs to the flavoprotein pyridine nucleotide cytochrome reductase family. FAD is required as a cofactor.

The protein localises to the mitochondrion outer membrane. The enzyme catalyses 2 Fe(III)-[cytochrome b5] + NADH = 2 Fe(II)-[cytochrome b5] + NAD(+) + H(+). Functionally, may mediate the reduction of outer membrane cytochrome b5. In Kluyveromyces lactis (strain ATCC 8585 / CBS 2359 / DSM 70799 / NBRC 1267 / NRRL Y-1140 / WM37) (Yeast), this protein is NADH-cytochrome b5 reductase 2 (MCR1).